Reading from the N-terminus, the 463-residue chain is Glutamate--tRNA ligase 2 (463 aa).

Residues 10-20 (PSPTGFLHIGS) carry the 'HIGH' region motif. Positions 239–243 (KLSKR) match the 'KMSKS' region motif. Lysine 242 provides a ligand contact to ATP.

The protein belongs to the class-I aminoacyl-tRNA synthetase family. Glutamate--tRNA ligase type 1 subfamily. Monomer.

It localises to the cytoplasm. The enzyme catalyses tRNA(Glu) + L-glutamate + ATP = L-glutamyl-tRNA(Glu) + AMP + diphosphate. In terms of biological role, catalyzes the attachment of glutamate to tRNA(Glu) in a two-step reaction: glutamate is first activated by ATP to form Glu-AMP and then transferred to the acceptor end of tRNA(Glu). The polypeptide is Glutamate--tRNA ligase 2 (Rickettsia akari (strain Hartford)).